A 258-amino-acid chain; its full sequence is Methylthioribulose-1-phosphate dehydratase (258 aa).

The span at 1-20 shows a compositional bias: polar residues; it reads MTPPSNGQAAETNDHLVQSD. The segment at 1–21 is disordered; that stretch reads MTPPSNGQAAETNDHLVQSDN. C105 contacts substrate. 2 residues coordinate Zn(2+): H123 and H125. The active-site Proton donor/acceptor is E153. H210 is a binding site for Zn(2+).

This sequence belongs to the aldolase class II family. MtnB subfamily. Requires Zn(2+) as cofactor.

It localises to the cytoplasm. It catalyses the reaction 5-(methylsulfanyl)-D-ribulose 1-phosphate = 5-methylsulfanyl-2,3-dioxopentyl phosphate + H2O. The protein operates within amino-acid biosynthesis; L-methionine biosynthesis via salvage pathway; L-methionine from S-methyl-5-thio-alpha-D-ribose 1-phosphate: step 2/6. Catalyzes the dehydration of methylthioribulose-1-phosphate (MTRu-1-P) into 2,3-diketo-5-methylthiopentyl-1-phosphate (DK-MTP-1-P). This is Methylthioribulose-1-phosphate dehydratase from Chaetomium globosum (strain ATCC 6205 / CBS 148.51 / DSM 1962 / NBRC 6347 / NRRL 1970) (Soil fungus).